Reading from the N-terminus, the 548-residue chain is Probable zinc metalloprotease EGY1, chloroplastic (548 aa).

The transit peptide at 1–18 directs the protein to the chloroplast; the sequence is MGTLTSVAFAAAVNIRFR. Residues 61–76 are compositionally biased toward basic and acidic residues; sequence NSNRDDSIGENGETHK. Residues 61 to 116 form a disordered region; sequence NSNRDDSIGENGETHKSSVVKTATFEEEDEETSKSSSTTSSSNEFGSDKTSMPSTI. Over residues 103–116 the composition is skewed to polar residues; the sequence is NEFGSDKTSMPSTI. Helical transmembrane passes span 242 to 262, 290 to 310, 326 to 346, 361 to 381, 388 to 408, 416 to 436, 474 to 494, and 516 to 536; these read YVIA…LGIA, LYPF…ILLF, LSIP…ITQF, LAGP…GLFL, ANDL…LGLI, AALH…WCGL, MLGL…YVLI, and ALVG…WDEL.

Belongs to the peptidase M50B family. In terms of tissue distribution, expressed in roots, leaves, cotyledons, hypocotyls, stems, flowers and siliques.

Its subcellular location is the plastid. It localises to the chloroplast membrane. Its function is as follows. Membrane-associated and ATP-independent metalloprotease required for development of both thylakoid grana and well-organized lamellae in chloroplast. Required for the accumulation of chlorophyll and chlorophyll a/b binding (CAB) proteins (from both PS I and PS II) in chloroplast membranes, and for grana formation and normal chloroplast development. Involved in the regulation of nuclear gene expression in response to ammonium stress and interacts with ABA signaling. Carries out beta-casein degradation in an ATP-independent manner in vitro. This Arabidopsis thaliana (Mouse-ear cress) protein is Probable zinc metalloprotease EGY1, chloroplastic (EGY1).